We begin with the raw amino-acid sequence, 579 residues long: Nuclear hormone receptor family member nhr-22 (579 aa).

Residues 93–173 (SRSCHVCSSP…AGMRRELVQA (81 aa)) constitute a DNA-binding region (nuclear receptor). 2 NR C4-type zinc fingers span residues 96 to 117 (CHVCSSPTANTLHFGGRSCKAC) and 133 to 161 (CIGTGDDTNPCRTHYELRMICRHCRFIKC). Positions 233-242 (LSPDPSSSQP) are enriched in low complexity. The tract at residues 233-256 (LSPDPSSSQPLDMTVTPPPLHRST) is disordered. The region spanning 304 to 577 (EVENKIFELV…SIMYDLLSFR (274 aa)) is the NR LBD domain.

This sequence belongs to the nuclear hormone receptor family.

It is found in the nucleus. In terms of biological role, orphan nuclear receptor. The protein is Nuclear hormone receptor family member nhr-22 (nhr-22) of Caenorhabditis elegans.